Here is an 80-residue protein sequence, read N- to C-terminus: Exodeoxyribonuclease 7 small subunit (80 aa).

It belongs to the XseB family. As to quaternary structure, heterooligomer composed of large and small subunits.

Its subcellular location is the cytoplasm. It catalyses the reaction Exonucleolytic cleavage in either 5'- to 3'- or 3'- to 5'-direction to yield nucleoside 5'-phosphates.. Bidirectionally degrades single-stranded DNA into large acid-insoluble oligonucleotides, which are then degraded further into small acid-soluble oligonucleotides. The protein is Exodeoxyribonuclease 7 small subunit of Rickettsia bellii (strain OSU 85-389).